Reading from the N-terminus, the 297-residue chain is Putative heme-binding peroxidase (297 aa).

The Proton acceptor role is filled by His-74. His-198 contacts heme b. The active-site Tryptophan radical intermediate is Trp-214.

Belongs to the peroxidase family. Cytochrome c peroxidase subfamily. It depends on heme b as a cofactor.

Destroys radicals which are normally produced within the cells and which are toxic to biological systems. The protein is Putative heme-binding peroxidase of Yarrowia lipolytica (strain CLIB 122 / E 150) (Yeast).